Here is a 441-residue protein sequence, read N- to C-terminus: Matrix extracellular phosphoglycoprotein (441 aa).

The signal sequence occupies residues 1–24 (MTPEGLMKMQAVSVGLLLFSMTWA). The N-linked (GlcNAc...) asparagine glycan is linked to Asn82. The interval 137–441 (QSSPVKSKHT…SGSSSESHGD (305 aa)) is disordered. The span at 142–156 (KSKHTKHTRQTRRST) shows a compositional bias: basic residues. A dentonin region spans residues 178–200 (PDLLVRGDNDVPPFSGDGQHFMH). Residues 183 to 185 (RGD) carry the Cell attachment site motif. Ser192 carries O-linked (Xyl...) (chondroitin sulfate) serine glycosylation. Over residues 211 to 223 (PESSTSRPLSGSS) the composition is skewed to polar residues. The segment covering 313 to 325 (SREKVKGGVEHAG) has biased composition (basic and acidic residues). Composition is skewed to polar residues over residues 349 to 358 (GNQLTLTASQ) and 391 to 405 (GQNN…SQRR). The tract at residues 424–441 (RDSSESSSSGSSSESHGD) is ASARM motif; interaction with PHEX. Over residues 428-441 (ESSSSGSSSESHGD) the composition is skewed to low complexity.

Belongs to the PF07175/osteoregulin family. As to quaternary structure, interacts (via ASARM motif) with PHEX; the interaction is zinc-dependent. Post-translationally, phosphorylated on serine residues in the ASARM motif; the phosphorylation is important for the inhibition of bone mineralization. In terms of processing, cleaved by CTSB/cathepsin B; the cleavage is blocked by metalloprotease PHEX. As to expression, expressed in osteocytes (at protein level). Expressed by chondrocytes, specifically in the hypertrophic zone of the bone growth plate (at protein level). Expressed in osteoblasts in bone (at protein level). Expressed by osteoblasts within the metaphysis (at protein level). Expressed at low levels in white fat, brown fat, testes, brain and aorta. Expressed in the craniofacial complex (at protein level). Expressed in odontoblasts, ameloblasts and in predentin during tooth development (at protein level). Expressed in the kidney (at protein level). Expressed in osteocytes in mandibular condylar cartilage and tibial cartilage (at protein level). Expressed in salivary glands.

It is found in the secreted. The protein localises to the extracellular space. It localises to the extracellular matrix. Its function is as follows. Regulates renal phosphate and uric acid excretion. Regulates bone mineralization by osteoblasts and cartilage mineralization by chondrocytes. Regulates the mineralization of the extracellular matrix of the craniofacial complex, such as teeth, bone and cartilage. Increases dental pulp stem cell proliferation. This Mus musculus (Mouse) protein is Matrix extracellular phosphoglycoprotein.